A 200-amino-acid polypeptide reads, in one-letter code: Large ribosomal subunit protein uL18 (200 aa).

It belongs to the universal ribosomal protein uL18 family. As to quaternary structure, part of the 50S ribosomal subunit. Contacts the 5S and 23S rRNAs.

In terms of biological role, this is one of the proteins that bind and probably mediate the attachment of the 5S RNA into the large ribosomal subunit, where it forms part of the central protuberance. In Thermococcus sibiricus (strain DSM 12597 / MM 739), this protein is Large ribosomal subunit protein uL18.